We begin with the raw amino-acid sequence, 1501 residues long: Inactive protein tyrosine kinase pTKL (1501 aa).

Asparagine 64, asparagine 128, and asparagine 133 each carry an N-linked (GlcNAc...) asparagine glycan. Residues 204 to 221 (KKNKKNKKNKKKKNKKTK) show a composition bias toward basic residues. A disordered region spans residues 204 to 223 (KKNKKNKKNKKKKNKKTKNT). N-linked (GlcNAc...) asparagine glycosylation is found at asparagine 239, asparagine 242, asparagine 258, and asparagine 327. Positions 257-273 (MNISLHEKNDKKNEKKN) are enriched in basic and acidic residues. The segment at 257–276 (MNISLHEKNDKKNEKKNEKK) is disordered. One can recognise an SAM domain in the interval 301-366 (WSLREVIQWL…LQLIKNLQVM (66 aa)). Positions 392–425 (NKNIKKGKNIKKEKKKKKEKNIKKEKKKKKKETK) are disordered. The segment covering 394–424 (NIKKGKNIKKEKKKKKEKNIKKEKKKKKKET) has biased composition (basic residues). Residues 399 to 433 (KNIKKEKKKKKEKNIKKEKKKKKKETKKFNNMDKK) are a coiled coil. N-linked (GlcNAc...) asparagine glycosylation is found at asparagine 448, asparagine 463, and asparagine 471. Positions 483-486 (KVSF) match the RVxF motif 1 motif. A glycan (N-linked (GlcNAc...) asparagine) is linked at asparagine 506. Residues 543–597 (QLSSPLSSPLSSPSPSSSPSSSPSSSPSSSPSSSPSPSSSPSPSSSPSSSPSSSP) are compositionally biased toward low complexity. Positions 543–607 (QLSSPLSSPL…SSPPSPLSYK (65 aa)) are disordered. N-linked (GlcNAc...) asparagine glycosylation occurs at asparagine 652. The tract at residues 659 to 678 (IKKSKSKYNNDKKEQKKLPL) is disordered. Residues 666–675 (YNNDKKEQKK) are compositionally biased toward basic and acidic residues. Asparagine 681, asparagine 712, asparagine 737, asparagine 811, and asparagine 819 each carry an N-linked (GlcNAc...) asparagine glycan. ATP contacts are provided by residues 836 to 844 (QNINNFGKY) and lysine 864. N-linked (GlcNAc...) asparagine glycosylation is found at asparagine 1024, asparagine 1031, asparagine 1074, and asparagine 1157. A Protein kinase domain is found at 1088–1483 (FHYQHNVLCG…HILKTISTLY (396 aa)). The short motif at 1238–1241 (KVLF) is the RVxF motif 2 element. The N-linked (GlcNAc...) asparagine glycan is linked to asparagine 1382.

It belongs to the protein kinase superfamily. TKL Ser/Thr protein kinase family. In terms of assembly, interacts (via RVxF motif 1 and/or 2) with phosphatase PP1C. May interact (via SAM domain) with SERA5 (via C-terminus).

It is found in the parasitophorous vacuole. Its subcellular location is the host cell membrane. The protein localises to the host cytoplasm. It localises to the host cytoskeleton. The sequence is that of Inactive protein tyrosine kinase pTKL from Plasmodium falciparum (isolate 3D7).